A 319-amino-acid chain; its full sequence is 7,8-didemethyl-8-hydroxy-5-deazariboflavin synthase (319 aa).

One can recognise a Radical SAM core domain in the interval 6-236 (VTYSPAFTLV…AEITIQIPPN (231 aa)). 3 residues coordinate [4Fe-4S] cluster: Cys20, Cys24, and Cys27.

It belongs to the radical SAM superfamily. CofG family. Consists of two subunits, CofG and CofH. [4Fe-4S] cluster is required as a cofactor.

It carries out the reaction 5-amino-5-(4-hydroxybenzyl)-6-(D-ribitylimino)-5,6-dihydrouracil + S-adenosyl-L-methionine = 7,8-didemethyl-8-hydroxy-5-deazariboflavin + 5'-deoxyadenosine + L-methionine + NH4(+) + H(+). It participates in cofactor biosynthesis; coenzyme F0 biosynthesis. In terms of biological role, catalyzes the radical-mediated synthesis of 7,8-didemethyl-8-hydroxy-5-deazariboflavin from 5-amino-5-(4-hydroxybenzyl)-6-(D-ribitylimino)-5,6-dihydrouracil. This Gloeobacter violaceus (strain ATCC 29082 / PCC 7421) protein is 7,8-didemethyl-8-hydroxy-5-deazariboflavin synthase.